A 344-amino-acid polypeptide reads, in one-letter code: uncharacterized protein (344 aa).

The disordered stretch occupies residues 190–232 (SGKRVRSAKKSGADAARASEGATCDRASSESVSPTARPPAQAS).

This is an uncharacterized protein from Treponema pallidum (strain Nichols).